A 156-amino-acid chain; its full sequence is D-aminoacyl-tRNA deacylase (156 aa).

The Gly-cisPro motif, important for rejection of L-amino acids signature appears at 137–138; it reads GP.

This sequence belongs to the DTD family. Homodimer.

The protein resides in the cytoplasm. The enzyme catalyses glycyl-tRNA(Ala) + H2O = tRNA(Ala) + glycine + H(+). The catalysed reaction is a D-aminoacyl-tRNA + H2O = a tRNA + a D-alpha-amino acid + H(+). An aminoacyl-tRNA editing enzyme that deacylates mischarged D-aminoacyl-tRNAs. Also deacylates mischarged glycyl-tRNA(Ala), protecting cells against glycine mischarging by AlaRS. Acts via tRNA-based rather than protein-based catalysis; rejects L-amino acids rather than detecting D-amino acids in the active site. By recycling D-aminoacyl-tRNA to D-amino acids and free tRNA molecules, this enzyme counteracts the toxicity associated with the formation of D-aminoacyl-tRNA entities in vivo and helps enforce protein L-homochirality. The sequence is that of D-aminoacyl-tRNA deacylase from Dictyoglomus turgidum (strain DSM 6724 / Z-1310).